The primary structure comprises 413 residues: Serine/threonine-protein phosphatase 7 (413 aa).

A disulfide bond links cysteine 28 and cysteine 67. Residues aspartate 84, histidine 86, aspartate 113, and asparagine 145 each coordinate Mn(2+). Histidine 146 (proton donor) is an active-site residue. Mn(2+)-binding residues include histidine 197 and histidine 303. A disordered region spans residues 391–413 (NVIDSDDEMDKSAMDTNNEQPNS). Over residues 404–413 (MDTNNEQPNS) the composition is skewed to polar residues.

This sequence belongs to the PPP phosphatase family. PP-7 subfamily. As to quaternary structure, monomer, homodimer, and heteromer. Interacts with calmodulin (CaM3 and CaM4) and HSFA1A/HSF1. Requires Mn(2+) as cofactor. Expressed in leaves, and, to a lower extent, in stems and flowers.

The protein resides in the nucleus. It is found in the nucleoplasm. The enzyme catalyses O-phospho-L-seryl-[protein] + H2O = L-seryl-[protein] + phosphate. The catalysed reaction is O-phospho-L-threonyl-[protein] + H2O = L-threonyl-[protein] + phosphate. With respect to regulation, inhibited by NaF and orthovanadate, as well as by divalent cations such as Ni(2+) and Zn(2+). Inhibited by polylysine with myelin basic protein as substrate, but activated by polylysine with pNPP as substrate. Reversibly regulated by redox agents. Inhibited by submillimolar Pi concentrations. Slightly repressed by calmodulin (CaM). Its function is as follows. Phosphatase active on para-nitrophenylphosphate (pNPP) and on various phosphoproteins such as myelin basic protein. Seems to act as a positive regulator of cryptochrome signaling involved in hypocotyl growth inhibition and cotyledon expansion under white and blue light conditions. Confers thermotolerance. Required for heat shock mediated-signaling pathway that leads to the expression of heat shock proteins (HSPs). The protein is Serine/threonine-protein phosphatase 7 (PP7) of Arabidopsis thaliana (Mouse-ear cress).